The primary structure comprises 707 residues: Anaerobic ribonucleoside-triphosphate reductase (707 aa).

Residues 4–95 (FGVIKRDGSR…EYRHDRDLAR (92 aa)) form the ATP-cone domain. The region spanning 584–707 (KKVNPYDKLD…EEVKRRVKHL (124 aa)) is the Glycine radical domain. Residues Cys-645, Cys-648, Cys-663, and Cys-666 each contribute to the Zn(2+) site. Gly-682 is subject to Glycine radical.

Belongs to the anaerobic ribonucleoside-triphosphate reductase family. As to quaternary structure, forms a tetramer composed of two NrdD and two NrdG subunits.

The enzyme catalyses a ribonucleoside 5'-triphosphate + formate + H(+) = a 2'-deoxyribonucleoside 5'-triphosphate + CO2 + H2O. Activated under anaerobic conditions by NrdG, a tightly associated activase. Activation involves the formation of a glycyl radical at Gly-682. Catalyzes the conversion of ribonucleotides into deoxyribonucleotides, which are required for DNA synthesis and repair. The sequence is that of Anaerobic ribonucleoside-triphosphate reductase (nrdD) from Haemophilus influenzae (strain ATCC 51907 / DSM 11121 / KW20 / Rd).